Consider the following 366-residue polypeptide: 3-dehydroquinate synthase (366 aa).

NAD(+) contacts are provided by residues 107–111 (GVIGD), 131–132 (TT), Lys-144, and Lys-153. The Zn(2+) site is built by Glu-186, His-251, and His-268.

This sequence belongs to the sugar phosphate cyclases superfamily. Dehydroquinate synthase family. It depends on Co(2+) as a cofactor. The cofactor is Zn(2+). NAD(+) serves as cofactor.

The protein localises to the cytoplasm. It carries out the reaction 7-phospho-2-dehydro-3-deoxy-D-arabino-heptonate = 3-dehydroquinate + phosphate. It participates in metabolic intermediate biosynthesis; chorismate biosynthesis; chorismate from D-erythrose 4-phosphate and phosphoenolpyruvate: step 2/7. Its function is as follows. Catalyzes the conversion of 3-deoxy-D-arabino-heptulosonate 7-phosphate (DAHP) to dehydroquinate (DHQ). In Microcystis aeruginosa (strain NIES-843 / IAM M-2473), this protein is 3-dehydroquinate synthase.